A 692-amino-acid polypeptide reads, in one-letter code: Elongation factor G (692 aa).

The 275-residue stretch at 8-282 (ENTRNIGIMA…AVIDYLPSPV (275 aa)) folds into the tr-type G domain. GTP is bound by residues 17 to 24 (AHIDAGKT), 81 to 85 (DTPGH), and 135 to 138 (NKMD).

The protein belongs to the TRAFAC class translation factor GTPase superfamily. Classic translation factor GTPase family. EF-G/EF-2 subfamily.

The protein resides in the cytoplasm. Functionally, catalyzes the GTP-dependent ribosomal translocation step during translation elongation. During this step, the ribosome changes from the pre-translocational (PRE) to the post-translocational (POST) state as the newly formed A-site-bound peptidyl-tRNA and P-site-bound deacylated tRNA move to the P and E sites, respectively. Catalyzes the coordinated movement of the two tRNA molecules, the mRNA and conformational changes in the ribosome. This Lysinibacillus sphaericus (strain C3-41) protein is Elongation factor G.